A 127-amino-acid polypeptide reads, in one-letter code: Chorismate mutase AroH (127 aa).

A Chorismate mutase aroH-type domain is found at I3–L121. Prephenate is bound by residues R7, T74–E78, R90, and Y108.

Homotrimer.

The protein localises to the cytoplasm. It catalyses the reaction chorismate = prephenate. Its pathway is metabolic intermediate biosynthesis; prephenate biosynthesis; prephenate from chorismate: step 1/1. Functionally, catalyzes the Claisen rearrangement of chorismate to prephenate. Probably involved in the aromatic amino acid biosynthesis. This is Chorismate mutase AroH from Bacillus subtilis (strain 168).